A 494-amino-acid chain; its full sequence is Casein kinase I homolog HRR25 (494 aa).

One can recognise a Protein kinase domain in the interval 9 to 278; that stretch reads FRIGRKIGSG…LARLFKDLSI (270 aa). Residues 15 to 23 and lysine 38 each bind ATP; that span reads IGSGSFGDI. The Proton acceptor role is filled by aspartate 128. A Phosphoserine modification is found at serine 143. The interval 394-494 is disordered; sequence RQQQPQQQVQ…DKPAGQSIWL (101 aa). Composition is skewed to low complexity over residues 395–418 and 432–444; these read QQQPQQQVQSSQPQPQPQQLQQQP and QQQQRDSQEQQQQ. Positions 445-479 are enriched in polar residues; it reads VPMATTRATQYPPQINSNNFNTNQASVPPQMRSNP.

The protein belongs to the protein kinase superfamily. CK1 Ser/Thr protein kinase family. Casein kinase I subfamily. In terms of assembly, interacts with HRI1. Interacts with ELP1/IKI3; the interaction leads to ELP1/IKI3 phosphorylation.

The protein localises to the cytoplasm. Its subcellular location is the nucleus. It localises to the nucleolus. It is found in the nucleoplasm. It carries out the reaction L-seryl-[protein] + ATP = O-phospho-L-seryl-[protein] + ADP + H(+). The enzyme catalyses L-threonyl-[protein] + ATP = O-phospho-L-threonyl-[protein] + ADP + H(+). In terms of biological role, protein kinase which phosphorylates serine and threonine residues. Can use casein as a substrate. Phosphorylates elongator complex member ELP1/IKI3 on 'Ser-1198' and 'Ser-1202' which promotes the tRNA modification function of the complex. Associated with repair of damaged DNA and meiosis. The sequence is that of Casein kinase I homolog HRR25 (HRR25) from Saccharomyces cerevisiae (strain ATCC 204508 / S288c) (Baker's yeast).